We begin with the raw amino-acid sequence, 150 residues long: Small ribosomal subunit protein uS15 (150 aa).

Residues 1 to 10 (MPHRSRHKRG) are compositionally biased toward basic residues. The segment at 1-21 (MPHRSRHKRGSSGSVRPATKT) is disordered.

This sequence belongs to the universal ribosomal protein uS15 family. In terms of assembly, part of the 30S ribosomal subunit.

In Caldivirga maquilingensis (strain ATCC 700844 / DSM 13496 / JCM 10307 / IC-167), this protein is Small ribosomal subunit protein uS15.